The chain runs to 1155 residues: MEADWDELSRIQVPPPSPHGMPTIATAIAFDDVMELLWVGNEYGRITSFCGPELQRYTSVRAHPVSEGPVRQILFHDRGVISLSSKSVHMITRRGLTQWHITHEDMTDLRCMSFTAQLNKVIVAGCQKAMFTIDIDKGHIVDKLPTEYNYTMMKKSRYLCAATDTGSVNALSLTDFRVVKSWKAHGTAVNDMDARNDLLVTCGFSVRHLGSPIVDPLANVYDLKTLSPLPPIPFHAGAAYVRMHPKLHTTSFVASQTGQLQVVDLMNPNAINLRQANVSFMLGIDLSPSGEALAINDAECAIHLWGSPSKVHFNEMSKEVEFADVPARPPPLDWSPDTPLSMIGMPYYHERLFSAWPSHLVFEIGSPPAPIDQALIPYLRPAEIGHYAPNPKKTRRNQVENTRALANSEPALIAPKFLSEKAREQSKAKSDGLVTDAAETLAGTKLNGEAEDDPLLKYSNVEIKYSRFGVDDFDFRFYNQTKFSGLETHIANSFTNALLQLFKFIPLIRNVALQHAASACIFENCLLCEMGYLFDMLEKADGQNCQATNLLKTFGSFREASSLGLLEENLTNKSLSTSIQSVNRFFLGQISHDFRMILPSSDDLDHKLATVASESIRCMFCQKEIVRPGNSLVNELIYPAIDIKQIRRNPAYRFSNILRASIERETQNRGWCNYCRRYQQVAIRKTVHRMPLVMMLNTALNNPIYRRLWAIPGWLPEAVGLVVDAGQILCFEGEDLRMRMQNNMPGLVVYELVGVVSEIDIPEHQKAHLVSFINVSISSREPETTNKWHLFNDFLVTEVDKDEALRFNQPWKVPCVLAYQVKDARHAMDDNWKNVLDTTLLYRDWSLNGGRSVESLATLSEEEKPTPGTPVALDTEFVDLEKAEIDVKADGSQEIVRPSKSGLARVSVLRGSGTREGVPFIDDYITIKETIVDYVTQYSGIKPGDLDPRTSQHNLVPLKVAYKKLWLLLNLGCVFVGHGLASDFRKINIQVPKCQTVDTQYLFFHPGKNRRLSLRYLAWAVFKEYIQEEPTDNNQGHDSIEDARMALRLWKKFQEYEDAGVVSQILEELFREGSKLGFRPPARNGATAVLSRPGTAVTMQNNSGRNTPSTPEVTAPTASAPTTPRQGFRRSVALTPSNGSFAPGTGDFFGGSPLK.

WD repeat units lie at residues 102-145 (THED…DKLP) and 276-315 (ANVS…HFNE). The interval 316–452 (MSKEVEFADV…GTKLNGEAED (137 aa)) is linker. In terms of domain architecture, USP spans 453–822 (DPLLKYSNVE…VPCVLAYQVK (370 aa)). In terms of domain architecture, Exonuclease spans 871 to 1049 (VALDTEFVDL…IEDARMALRL (179 aa)). D874, E876, D983, and D1042 together coordinate a divalent metal cation. A disordered region spans residues 1095 to 1155 (TAVTMQNNSG…GDFFGGSPLK (61 aa)). Residues 1097–1106 (VTMQNNSGRN) show a composition bias toward polar residues. Low complexity predominate over residues 1107–1124 (TPSTPEVTAPTASAPTTP).

It belongs to the peptidase C19 family. PAN2 subfamily. As to quaternary structure, forms a heterotrimer with an asymmetric homodimer of the regulatory subunit pan3 to form the poly(A)-nuclease (PAN) deadenylation complex. A divalent metal cation serves as cofactor.

Its subcellular location is the cytoplasm. It catalyses the reaction Exonucleolytic cleavage of poly(A) to 5'-AMP.. Positively regulated by the regulatory subunit pan3. Catalytic subunit of the poly(A)-nuclease (PAN) deadenylation complex, one of two cytoplasmic mRNA deadenylases involved in mRNA turnover. PAN specifically shortens poly(A) tails of RNA and the activity is stimulated by poly(A)-binding protein pab1. PAN deadenylation is followed by rapid degradation of the shortened mRNA tails by the CCR4-NOT complex. Deadenylated mRNAs are then degraded by two alternative mechanisms, namely exosome-mediated 3'-5' exonucleolytic degradation, or deadenylation-dependent mRNA decaping and subsequent 5'-3' exonucleolytic degradation by xrn1. May also be involved in post-transcriptional maturation of mRNA poly(A) tails. This chain is PAN2-PAN3 deadenylation complex catalytic subunit pan2, found in Aspergillus oryzae (strain ATCC 42149 / RIB 40) (Yellow koji mold).